We begin with the raw amino-acid sequence, 378 residues long: Protein RecA (378 aa).

Residue 65-72 (GPESSGKT) coordinates ATP. The tract at residues 325–378 (AYGMDQTGEEDDQADDKSKDKATKPSDKSQAQAKPKKPVATETSLDLDDSKTDK) is disordered. Positions 339-351 (DDKSKDKATKPSD) are enriched in basic and acidic residues.

This sequence belongs to the RecA family.

The protein resides in the cytoplasm. In terms of biological role, can catalyze the hydrolysis of ATP in the presence of single-stranded DNA, the ATP-dependent uptake of single-stranded DNA by duplex DNA, and the ATP-dependent hybridization of homologous single-stranded DNAs. It interacts with LexA causing its activation and leading to its autocatalytic cleavage. The chain is Protein RecA from Lactiplantibacillus pentosus (Lactobacillus pentosus).